Here is a 69-residue protein sequence, read N- to C-terminus: VLIIAVLFLTACQLTTAETYSRGRQKHRARRSTDKNSKWTRECTRSGGACYSHNQCCDDFCSTATSTCV.

Positions 1–17 (VLIIAVLFLTACQLTTA) are cleaved as a signal peptide. Positions 18-41 (ETYSRGRQKHRARRSTDKNSKWTR) are excised as a propeptide. 3 cysteine pairs are disulfide-bonded: Cys43/Cys57, Cys50/Cys61, and Cys56/Cys68.

It belongs to the conotoxin O1 superfamily. Expressed by the venom duct.

It localises to the secreted. This Conus ebraeus (Hebrew cone) protein is Conotoxin Eb6.22 (E1).